A 264-amino-acid chain; its full sequence is MSLSKVSVENSLKPEKFVKISWVDKLLPNYFSILKYLSITDFSVVKAQSYESLVPVKLLRGVDLTKHLYVTLLGVVVSGVWNVPESCRGGATVALVDTRMHSVAEGTICKFSAPATVREFSVRFIPNYSVVAADALRDPWSLFVRLSNVGIKDGFHPLTLEVACLVATTNSIIKKGLRASVVESVVSSDQSIVLDSLSEKVEPFFDKVPISAAVMARDPSYRSRSQSVSGRGKRHSKPPNRRLDSASEESSSVSFDDGLQSDHT.

The tract at residues 221–264 (YRSRSQSVSGRGKRHSKPPNRRLDSASEESSSVSFDDGLQSDHT) is disordered. Residues 231-240 (RGKRHSKPPN) are compositionally biased toward basic residues.

Belongs to the tobamovirus movement protein family.

It is found in the host cytoplasm. The protein resides in the host cytoskeleton. It localises to the host cell junction. The protein localises to the host plasmodesma. Its function is as follows. Transports viral genome to neighboring plant cells directly through plasmosdesmata, without any budding. The movement protein allows efficient cell to cell propagation, by bypassing the host cell wall barrier. Forms a ribonucleoprotein complex with viral RNA. Binds microtubules and modulates microtubule stability. Can bind double-stranded DNA. The polypeptide is Movement protein (MP) (Citrullus (Cucumber)).